The following is a 517-amino-acid chain: Retrotransposon-like protein 1 (517 aa).

Disordered regions lie at residues 1–29 (MEVN…QQQL) and 142–161 (EEER…DARS).

In Caenorhabditis elegans, this protein is Retrotransposon-like protein 1 (retr-1).